The sequence spans 438 residues: UDP-N-acetylmuramoylalanine--D-glutamate ligase (438 aa).

112 to 118 (GSNGKST) is a binding site for ATP.

Belongs to the MurCDEF family.

Its subcellular location is the cytoplasm. It catalyses the reaction UDP-N-acetyl-alpha-D-muramoyl-L-alanine + D-glutamate + ATP = UDP-N-acetyl-alpha-D-muramoyl-L-alanyl-D-glutamate + ADP + phosphate + H(+). It functions in the pathway cell wall biogenesis; peptidoglycan biosynthesis. Its function is as follows. Cell wall formation. Catalyzes the addition of glutamate to the nucleotide precursor UDP-N-acetylmuramoyl-L-alanine (UMA). The chain is UDP-N-acetylmuramoylalanine--D-glutamate ligase from Salmonella paratyphi A (strain ATCC 9150 / SARB42).